Consider the following 220-residue polypeptide: Large ribosomal subunit protein uL16 (220 aa).

It belongs to the universal ribosomal protein uL16 family. Component of the large ribosomal subunit. Mature ribosomes consist of a small (40S) and a large (60S) subunit. The 40S subunit contains about 32 different proteins and 1 molecule of RNA (18S). The 60S subunit contains 45 different proteins and 3 molecules of RNA (25S, 5.8S and 5S).

The protein localises to the cytoplasm. Its function is as follows. Component of the ribosome, a large ribonucleoprotein complex responsible for the synthesis of proteins in the cell. The small ribosomal subunit (SSU) binds messenger RNAs (mRNAs) and translates the encoded message by selecting cognate aminoacyl-transfer RNA (tRNA) molecules. The large subunit (LSU) contains the ribosomal catalytic site termed the peptidyl transferase center (PTC), which catalyzes the formation of peptide bonds, thereby polymerizing the amino acids delivered by tRNAs into a polypeptide chain. The nascent polypeptides leave the ribosome through a tunnel in the LSU and interact with protein factors that function in enzymatic processing, targeting, and the membrane insertion of nascent chains at the exit of the ribosomal tunnel. The protein is Large ribosomal subunit protein uL16 of Candida albicans (strain SC5314 / ATCC MYA-2876) (Yeast).